The primary structure comprises 737 residues: Cellulose synthase-like protein E1 (737 aa).

The next 2 helical transmembrane spans lie at 26 to 45 and 58 to 78; these read AVYR…VLYY and AAWL…VIAQ. Active-site residues include aspartate 146 and aspartate 451. 5 helical membrane passes run 528-548, 551-571, 654-674, 683-703, and 716-736; these read LWAA…LGLV, TPLF…VFCV, VIIA…LSQI, WNVF…NMPI, and IPTA…LVPI.

It belongs to the glycosyltransferase 2 family. Plant cellulose synthase-like E subfamily.

It is found in the golgi apparatus membrane. Thought to be a Golgi-localized beta-glycan synthase that polymerize the backbones of noncellulosic polysaccharides (hemicelluloses) of plant cell wall. This chain is Cellulose synthase-like protein E1 (CSLE1), found in Oryza sativa subsp. japonica (Rice).